Consider the following 140-residue polypeptide: MSWDSYIDNLVAQTKDASGTAHSDRACIIGLDGGAPWTTAGHANALKLQGTEGANIAKCFKSKDFSAFMAGGVHAEGLKYQFLREEDAKLVLAKKKGEGAITLQASKTAIVIAHCPEGGQQGNTNKGVSVIAEYLESLGM.

S2 bears the N-acetylserine mark.

The protein belongs to the profilin family. As to quaternary structure, occurs in many kinds of cells as a complex with monomeric actin in a 1:1 ratio.

Its subcellular location is the cytoplasm. The protein localises to the cytoskeleton. Functionally, binds to actin and affects the structure of the cytoskeleton. At high concentrations, profilin prevents the polymerization of actin, whereas it enhances it at low concentrations. By binding to PIP2, it inhibits the formation of IP3 and DG. This is Profilin from Clypeaster japonicus (Sand dollar).